Consider the following 415-residue polypeptide: Nacrein-like protein F (415 aa).

Residue asparagine 27 is glycosylated (N-linked (GlcNAc...) asparagine). The region spanning 33–414 (AGFSYDRSIC…KNKVTVYKSF (382 aa)) is the Alpha-carbonic anhydrase domain. Zn(2+)-binding residues include histidine 132, histidine 134, and histidine 157. A disordered region spans residues 201–297 (DEPDDEECKH…GENGHKHGCR (97 aa)). Positions 207–219 (ECKHILKGHHPDN) are enriched in basic and acidic residues. Residues 220-289 (NENGNGDNGN…NNGENGNNGE (70 aa)) are compositionally biased toward low complexity. 22 consecutive repeat copies span residues 225 to 227 (GDN), 228 to 230 (GNN), 231 to 233 (GYN), 234 to 236 (GDN), 237 to 239 (GNN), 240 to 242 (GDN), 243 to 245 (GNN), 246 to 248 (GYN), 249 to 251 (GDN), 252 to 254 (GNN), 255 to 257 (GVN), 258 to 260 (GNN), 261 to 263 (GYN), 264 to 266 (GDN), 267 to 269 (GNN), 270 to 272 (GDN), 273 to 275 (GNN), 276 to 278 (GEN), 279 to 281 (GNN), 282 to 284 (GEN), 285 to 286 (GN), and 288 to 290 (GEN). A 22 X 3 AA approximate tandem repeats of G-X-N region spans residues 225–290 (GDNGNNGYNG…NGENGNNGEN (66 aa)). Residue 355–356 (TT) coordinates substrate.

The protein belongs to the alpha-carbonic anhydrase family. As to quaternary structure, homooligomer; disulfide-linked. May also be disulfide-linked to insoluble organic matrix. Requires Zn(2+) as cofactor. In terms of tissue distribution, expressed in the mantle.

It is found in the secreted. It localises to the extracellular space. The protein localises to the extracellular matrix. It catalyses the reaction hydrogencarbonate + H(+) = CO2 + H2O. In terms of biological role, acts as a negative regulator for calcification in the shells of mollusks. May function both as a calcium concentrator and as a carbonic anhydrase required for production of carbonate ions, which are assembled to CaCO(3) at mineralization sites. Is important for shell formation in both the calcitic prismatic layer and the aragonitic nacreous layer. Shows inhibitory activity of crystal formation when present in free state but, when attached to the insoluble matrix, may regulate the form and size of aragonite crystal. This is Nacrein-like protein F from Pinctada fucata (Akoya pearl oyster).